Reading from the N-terminus, the 223-residue chain is UPF0319 protein VPA1584 (223 aa).

A signal peptide spans 1–21 (MKLIKPLTCALALAMSGMAFA).

This sequence belongs to the UPF0319 family.

The protein is UPF0319 protein VPA1584 of Vibrio parahaemolyticus serotype O3:K6 (strain RIMD 2210633).